A 2175-amino-acid chain; its full sequence is Homeobox protein cut (2175 aa).

Disordered regions lie at residues 139 to 170 and 249 to 432; these read NLLANTNTPSPSPPLLSAEQQQQLQSSLQQSG and GNVK…GQPA. 2 stretches are compositionally biased toward low complexity: residues 153–169 and 249–268; these read LLSAEQQQQLQSSLQQS and GNVKSGSTTSNANHTNSNNS. Residues 265 to 343 are a coiled coil; the sequence is SNNSHQDEEE…ENKDAGEASL (79 aa). Over residues 271 to 294 the composition is skewed to acidic residues; that stretch reads DEEELDDEEEDEEEDEDEDDEEEN. Positions 309–320 are enriched in polar residues; sequence QQETRTEPSATT. Residues 344-359 are compositionally biased toward low complexity; sequence NVSNNHNTTDSNNSCS. Over residues 360–374 the composition is skewed to polar residues; sequence RKNNNGGNESEQHVA. The span at 384-415 shows a compositional bias: low complexity; that stretch reads NNNTNTSNNNNTSNTATSNTNNNNNNNSSSGN. Residues 433 to 499 adopt a coiled-coil conformation; sequence VLLAAKDKEI…NEALAEATAL (67 aa). The span at 503-515 shows a compositional bias: low complexity; the sequence is ASTNNNNNSQSSD. Disordered stretches follow at residues 503-600 and 656-765; these read ASTN…KIKK and ASDA…NTNA. A compositionally biased stretch (acidic residues) spans 546 to 568; sequence AEDDEEDEDQAMLVDSEEAEDKP. Over residues 673–696 the composition is skewed to basic residues; the sequence is QQQHQHQQQHHQQQHLHQQHHHHL. Residues 697–710 show a composition bias toward low complexity; that stretch reads QQQPNSGSNSNPAS. The span at 714 to 735 shows a compositional bias: basic residues; it reads HHGHHLHGHGLLHPSSAHHLHH. Residues 738-765 are compositionally biased toward low complexity; sequence TESNSNSSTPTAAGNNNGSNNSSSNTNA. The segment at residues 877-964 is a DNA-binding region (CUT 1); sequence NMDKYANQAL…VMLLKSLIPK (88 aa). Disordered stretches follow at residues 1001-1083 and 1197-1289; these read LMKQ…HDDQ and QRSS…EFAA. 2 stretches are compositionally biased toward basic and acidic residues: residues 1009–1030 and 1062–1083; these read QHREQERRSHGGEDSHSNEDSK and QREREREQREREQQQRLRHDDQ. A coiled-coil region spans residues 1056–1161; sequence EQAAAQQRER…QQQAAQAQAQ (106 aa). Residues 1249–1282 are compositionally biased toward low complexity; the sequence is GAPPTAAPPTGGASSNSAAPSPLSNSILPPALSS. The CUT 2 DNA-binding region spans 1330-1417; the sequence is QQQFDMFNNL…VHKLVASQYK (88 aa). A coiled-coil region spans residues 1463-1522; it reads AQAQHLMQQMQAAAMSAAMQQQQVAQAQQQAQQAQQAQQHLQQQAQQHLQQQQHLAQQQH. Residues 1507 to 1540 are compositionally biased toward low complexity; it reads AQQHLQQQQHLAQQQHPHQQHHQAAAAAAALHHQ. 6 disordered regions span residues 1507–1588, 1695–1747, 1803–1826, 1922–1955, 2069–2097, and 2113–2175; these read AQQH…PMLM, ERRE…PSKK, QVPHGPAGQDNPIPSRESTSATPF, RSDDYQDDLELEGGGHNLSDNESLEGQEPEDKTT, KQEEDDDEEQSGSVNLDNEDNATSEQKLK, and SSTG…GWNY. Gly residues predominate over residues 1564-1573; it reads AQPGGPGGNQ. A DNA-binding region (CUT 3) is located at residues 1608–1695; the sequence is YEMAALTQDL…VERLQLLKNE (88 aa). Positions 1709 to 1732 are enriched in low complexity; it reads NQQDNSSDTSSNDTNDFYTSSPGP. The segment at residues 1745 to 1804 is a DNA-binding region (homeobox); that stretch reads SKKQRVLFSEEQKEALRLAFALDPYPNVGTIEFLANELGLATRTITNWFHNHRMRLKQQV. Serine 1940 and serine 1944 each carry phosphoserine. Residues 2126–2135 are compositionally biased toward pro residues; sequence PLAPPPPPPA. Over residues 2136–2175 the composition is skewed to low complexity; it reads ASSSIVSGESTTSSSSSSNTSSSTPAVTTAAATAAAGWNY.

It belongs to the CUT homeobox family. Detected in many cells in the central nervous system, all external sensory organs, some peripheral neurons, and in the non-neural cells of the spiracles and the Malpighian tubules.

It localises to the nucleus. Functionally, regulator of cell fate decisions in multiple lineages. Specifically, functions as a determination factor that specifies sensory organ identity in precursor cells. Probably also involved in cell type specification of Malpighian tubules. In absence of cut gene external sensory organs are transformed into chordotonal organs. The polypeptide is Homeobox protein cut (ct) (Drosophila melanogaster (Fruit fly)).